Reading from the N-terminus, the 181-residue chain is Translation initiation factor IF-3 (181 aa).

The protein belongs to the IF-3 family. In terms of assembly, monomer.

The protein localises to the cytoplasm. Functionally, IF-3 binds to the 30S ribosomal subunit and shifts the equilibrium between 70S ribosomes and their 50S and 30S subunits in favor of the free subunits, thus enhancing the availability of 30S subunits on which protein synthesis initiation begins. In Pseudoalteromonas translucida (strain TAC 125), this protein is Translation initiation factor IF-3.